Here is a 529-residue protein sequence, read N- to C-terminus: Delayed-rectifier potassium channel regulatory subunit KCNS1 (529 aa).

The Cytoplasmic portion of the chain corresponds to 1–217 (MLMLLVRGTH…LTMENPGYSL (217 aa)). A helical membrane pass occupies residues 218 to 239 (PSKLFSCVSISVVLASIAAMCI). Residues 240–270 (HSLPEYQAREAAAAVAAVAAGRSPEGVRDDP) are Extracellular-facing. The chain crosses the membrane as a helical span at residues 271–293 (VLRRLEYFCIAWFSFEVSSRLLL). Topologically, residues 294–304 (APSTRNFFCHP) are cytoplasmic. The helical transmembrane segment at 305–322 (LNLIDIVSVLPFYLTLLA) threads the bilayer. Residues 323–340 (GVALGDQGGTGGKELGHL) lie on the Extracellular side of the membrane. A helical; Voltage-sensor membrane pass occupies residues 341-361 (GKVVQVFRLMRIFRVLKLARH). Topologically, residues 362–376 (STGLRSLGATLKHSY) are cytoplasmic. A helical membrane pass occupies residues 377-398 (REVGILLLYLAVGVSVFSGVAY). Topologically, residues 399-411 (TAEKEEDVGFNTI) are extracellular. The helical intramembrane region spans 412-423 (PACWWWGTVSMT). A Selectivity filter motif is present at residues 424–429 (TVGYGD). The stretch at 424–431 (TVGYGDVV) is an intramembrane region. Topologically, residues 432 to 438 (PVTVAGK) are extracellular. A helical membrane pass occupies residues 439 to 467 (LAASGCILGGILVVALPITIIFNKFSHFY). Residues 468-529 (RRQKALEAAV…PSEPPHPQMY (62 aa)) lie on the Cytoplasmic side of the membrane. The interval 494-529 (GVSEASLETSRETSQEGRSADLETQAPSEPPHPQMY) is disordered. The segment covering 502-514 (TSRETSQEGRSAD) has biased composition (basic and acidic residues).

This sequence belongs to the potassium channel family. S (TC 1.A.1.2) subfamily. Kv9.1/KCNS1 sub-subfamily. In terms of assembly, heterotetramer with KCNB1. Heterotetramer with KCNB2. Does not form homomultimers.

It localises to the cell membrane. Potassium channel regulatory subunit that modulate the delayed rectifier voltage-gated potassium channel activity of KCNB1 and KCNB2 by altering their kinetics, expression levels, and shifting the half-inactivation potential to more polarized values. While it does not form functional channels on its own, it can form functional heterotetrameric channels with KCNB1 and KCNB2. Each regulatory subunit has unique regulatory properties that can lead to extensive inhibition, significant changes in kinetics, and/or substantial shifts in the voltage dependencies of the inactivation process. The polypeptide is Delayed-rectifier potassium channel regulatory subunit KCNS1 (Chlorocebus aethiops (Green monkey)).